Consider the following 170-residue polypeptide: Acireductone dioxygenase (170 aa).

4 residues coordinate Fe(2+): His99, His101, Glu105, and His144. 4 residues coordinate Ni(2+): His99, His101, Glu105, and His144.

Belongs to the acireductone dioxygenase (ARD) family. As to quaternary structure, monomer. Fe(2+) serves as cofactor. Ni(2+) is required as a cofactor.

It catalyses the reaction 1,2-dihydroxy-5-(methylsulfanyl)pent-1-en-3-one + O2 = 3-(methylsulfanyl)propanoate + CO + formate + 2 H(+). The catalysed reaction is 1,2-dihydroxy-5-(methylsulfanyl)pent-1-en-3-one + O2 = 4-methylsulfanyl-2-oxobutanoate + formate + 2 H(+). It participates in amino-acid biosynthesis; L-methionine biosynthesis via salvage pathway; L-methionine from S-methyl-5-thio-alpha-D-ribose 1-phosphate: step 5/6. Catalyzes 2 different reactions between oxygen and the acireductone 1,2-dihydroxy-3-keto-5-methylthiopentene (DHK-MTPene) depending upon the metal bound in the active site. Fe-containing acireductone dioxygenase (Fe-ARD) produces formate and 2-keto-4-methylthiobutyrate (KMTB), the alpha-ketoacid precursor of methionine in the methionine recycle pathway. Ni-containing acireductone dioxygenase (Ni-ARD) produces methylthiopropionate, carbon monoxide and formate, and does not lie on the methionine recycle pathway. In Bacillus anthracis, this protein is Acireductone dioxygenase.